A 1235-amino-acid chain; its full sequence is Ubiquitin carboxyl-terminal hydrolase 40 (1235 aa).

Positions 41 to 482 constitute a USP domain; the sequence is SGIRNQGGTC…SAYMLFYRKS (442 aa). The active-site Nucleophile is the Cys-50. Catalysis depends on His-305, which acts as the Proton acceptor. Residues 1180 to 1190 show a composition bias toward basic and acidic residues; it reads IRDDTGKEKQK. Residues 1180 to 1235 form a disordered region; the sequence is IRDDTGKEKQKQRALGRRKSQEALHEQSSYILSSAETPARPRAPETSLSIHVGSFR. Positions 1205 to 1215 are enriched in polar residues; sequence EQSSYILSSAE.

This sequence belongs to the peptidase C19 family. Broadly expressed.

It catalyses the reaction Thiol-dependent hydrolysis of ester, thioester, amide, peptide and isopeptide bonds formed by the C-terminal Gly of ubiquitin (a 76-residue protein attached to proteins as an intracellular targeting signal).. In terms of biological role, may be catalytically inactive. The protein is Ubiquitin carboxyl-terminal hydrolase 40 (USP40) of Homo sapiens (Human).